We begin with the raw amino-acid sequence, 129 residues long: Small ribosomal subunit protein uS9 (129 aa).

A disordered region spans residues 107 to 129 (SRVVERKKPGKKKARRSPQFSKR). Positions 114-129 (KPGKKKARRSPQFSKR) are enriched in basic residues.

It belongs to the universal ribosomal protein uS9 family.

The polypeptide is Small ribosomal subunit protein uS9 (Sulfurovum sp. (strain NBC37-1)).